Here is a 119-residue protein sequence, read N- to C-terminus: Immunoglobulin lambda variable 4-69 (119 aa).

An N-terminal signal peptide occupies residues 1–20 (MAWTPLLFLTLLLHCTGSLS). Positions 21–45 (QLVLTQSPSASASLGASVKLTCTLS) are framework-1. The Ig-like domain maps to 21–119 (QLVLTQSPSA…YYCQTWGTGI (99 aa)). A disulfide bridge links C42 with C112. Positions 46 to 52 (SGHSSYA) are complementarity-determining-1. The tract at residues 53-69 (IAWHQQQPEKGPRYLMK) is framework-2. Residues 70-76 (LNSDGSH) are complementarity-determining-2. The tract at residues 73-92 (DGSHSKGDGIPDRFSGSSSG) is disordered. The tract at residues 77 to 112 (SKGDGIPDRFSGSSSGAERYLTISSLQSEDEADYYC) is framework-3. The tract at residues 113 to 119 (QTWGTGI) is complementarity-determining-3.

As to quaternary structure, immunoglobulins are composed of two identical heavy chains and two identical light chains; disulfide-linked.

It is found in the secreted. Its subcellular location is the cell membrane. In terms of biological role, v region of the variable domain of immunoglobulin light chains that participates in the antigen recognition. Immunoglobulins, also known as antibodies, are membrane-bound or secreted glycoproteins produced by B lymphocytes. In the recognition phase of humoral immunity, the membrane-bound immunoglobulins serve as receptors which, upon binding of a specific antigen, trigger the clonal expansion and differentiation of B lymphocytes into immunoglobulins-secreting plasma cells. Secreted immunoglobulins mediate the effector phase of humoral immunity, which results in the elimination of bound antigens. The antigen binding site is formed by the variable domain of one heavy chain, together with that of its associated light chain. Thus, each immunoglobulin has two antigen binding sites with remarkable affinity for a particular antigen. The variable domains are assembled by a process called V-(D)-J rearrangement and can then be subjected to somatic hypermutations which, after exposure to antigen and selection, allow affinity maturation for a particular antigen. The sequence is that of Immunoglobulin lambda variable 4-69 from Homo sapiens (Human).